Here is a 129-residue protein sequence, read N- to C-terminus: ATP synthase epsilon chain (129 aa).

It belongs to the ATPase epsilon chain family. F-type ATPases have 2 components, CF(1) - the catalytic core - and CF(0) - the membrane proton channel. CF(1) has five subunits: alpha(3), beta(3), gamma(1), delta(1), epsilon(1). CF(0) has three main subunits: a, b and c.

It localises to the cell inner membrane. Functionally, produces ATP from ADP in the presence of a proton gradient across the membrane. This Campylobacter jejuni subsp. jejuni serotype O:6 (strain 81116 / NCTC 11828) protein is ATP synthase epsilon chain.